A 105-amino-acid chain; its full sequence is Translation initiation factor 1A (105 aa).

The region spanning 18-92 (IRVKLPNKRI…DKCDIIYRYT (75 aa)) is the S1-like domain.

This sequence belongs to the eIF-1A family.

Seems to be required for maximal rate of protein biosynthesis. Enhances ribosome dissociation into subunits and stabilizes the binding of the initiator Met-tRNA(I) to 40 S ribosomal subunits. This chain is Translation initiation factor 1A (eIF1A), found in Methanocorpusculum labreanum (strain ATCC 43576 / DSM 4855 / Z).